A 295-amino-acid polypeptide reads, in one-letter code: Indole-3-glycerol phosphate synthase (295 aa).

This sequence belongs to the TrpC family.

It carries out the reaction 1-(2-carboxyphenylamino)-1-deoxy-D-ribulose 5-phosphate + H(+) = (1S,2R)-1-C-(indol-3-yl)glycerol 3-phosphate + CO2 + H2O. The protein operates within amino-acid biosynthesis; L-tryptophan biosynthesis; L-tryptophan from chorismate: step 4/5. This Synechococcus sp. (strain ATCC 27144 / PCC 6301 / SAUG 1402/1) (Anacystis nidulans) protein is Indole-3-glycerol phosphate synthase.